A 94-amino-acid chain; its full sequence is Co-chaperonin GroES (94 aa).

The protein belongs to the GroES chaperonin family. Heptamer of 7 subunits arranged in a ring. Interacts with the chaperonin GroEL.

The protein resides in the cytoplasm. In terms of biological role, together with the chaperonin GroEL, plays an essential role in assisting protein folding. The GroEL-GroES system forms a nano-cage that allows encapsulation of the non-native substrate proteins and provides a physical environment optimized to promote and accelerate protein folding. GroES binds to the apical surface of the GroEL ring, thereby capping the opening of the GroEL channel. The polypeptide is Co-chaperonin GroES (Shouchella clausii (strain KSM-K16) (Alkalihalobacillus clausii)).